The sequence spans 200 residues: MSKYAGIVLAGGMSSRFGEPKALASWQGSTFIEHILKVMTSTLQEVVVISHSDIKERVEKLVQVPVIEDIPHYKGNGPLAGIVSGMEYIEADWYAIMPCDAPNVSHEWFTILLGQTSNEYDAVVPIINGRKQPLLAAYHNRVKEKIYALLQEEKRSMVQLLSQCNVKYIAGEDVQANADWFINVNTKEEYVQAQKDLSNK.

GTP contacts are provided by residues 9–11 (LAG), lysine 21, aspartate 69, and aspartate 100. Residue aspartate 100 participates in Mg(2+) binding.

It belongs to the MobA family. Requires Mg(2+) as cofactor.

It is found in the cytoplasm. The catalysed reaction is Mo-molybdopterin + GTP + H(+) = Mo-molybdopterin guanine dinucleotide + diphosphate. In terms of biological role, transfers a GMP moiety from GTP to Mo-molybdopterin (Mo-MPT) cofactor (Moco or molybdenum cofactor) to form Mo-molybdopterin guanine dinucleotide (Mo-MGD) cofactor. The chain is Probable molybdenum cofactor guanylyltransferase from Bacillus cereus (strain AH820).